The primary structure comprises 406 residues: Peptidase T (406 aa).

Histidine 82 is a binding site for Zn(2+). The active site involves aspartate 84. Aspartate 142 provides a ligand contact to Zn(2+). The active-site Proton acceptor is the glutamate 176. Positions 177, 199, and 381 each coordinate Zn(2+).

Belongs to the peptidase M20B family. Requires Zn(2+) as cofactor.

It localises to the cytoplasm. The catalysed reaction is Release of the N-terminal residue from a tripeptide.. In terms of biological role, cleaves the N-terminal amino acid of tripeptides. The protein is Peptidase T of Streptococcus agalactiae serotype III (strain NEM316).